A 496-amino-acid chain; its full sequence is Probable malate:quinone oxidoreductase (496 aa).

Belongs to the MQO family. It depends on FAD as a cofactor.

The catalysed reaction is (S)-malate + a quinone = a quinol + oxaloacetate. Its pathway is carbohydrate metabolism; tricarboxylic acid cycle; oxaloacetate from (S)-malate (quinone route): step 1/1. This Prochlorococcus marinus (strain NATL1A) protein is Probable malate:quinone oxidoreductase.